The sequence spans 124 residues: LOB domain-containing protein 9 (124 aa).

Residues 11 to 113 (APCALCTTKN…IYLNELKEKI (103 aa)) enclose the LOB domain.

Belongs to the LOB domain-containing protein family.

The sequence is that of LOB domain-containing protein 9 (LBD9) from Arabidopsis thaliana (Mouse-ear cress).